Reading from the N-terminus, the 74-residue chain is DNA-directed RNA polymerase subunit omega (74 aa).

It belongs to the RNA polymerase subunit omega family. The RNAP catalytic core consists of 2 alpha, 1 beta, 1 beta' and 1 omega subunit. When a sigma factor is associated with the core the holoenzyme is formed, which can initiate transcription.

The enzyme catalyses RNA(n) + a ribonucleoside 5'-triphosphate = RNA(n+1) + diphosphate. Its function is as follows. Promotes RNA polymerase assembly. Latches the N- and C-terminal regions of the beta' subunit thereby facilitating its interaction with the beta and alpha subunits. This is DNA-directed RNA polymerase subunit omega from Helicobacter pylori (strain P12).